Consider the following 358-residue polypeptide: Probable branched-chain-amino-acid aminotransferase (358 aa).

An N6-(pyridoxal phosphate)lysine modification is found at K196.

Belongs to the class-IV pyridoxal-phosphate-dependent aminotransferase family. The cofactor is pyridoxal 5'-phosphate.

The catalysed reaction is L-leucine + 2-oxoglutarate = 4-methyl-2-oxopentanoate + L-glutamate. It catalyses the reaction L-isoleucine + 2-oxoglutarate = (S)-3-methyl-2-oxopentanoate + L-glutamate. The enzyme catalyses L-valine + 2-oxoglutarate = 3-methyl-2-oxobutanoate + L-glutamate. Its pathway is amino-acid biosynthesis; L-isoleucine biosynthesis; L-isoleucine from 2-oxobutanoate: step 4/4. The protein operates within amino-acid biosynthesis; L-leucine biosynthesis; L-leucine from 3-methyl-2-oxobutanoate: step 4/4. It participates in amino-acid biosynthesis; L-valine biosynthesis; L-valine from pyruvate: step 4/4. In terms of biological role, acts on leucine, isoleucine and valine. The polypeptide is Probable branched-chain-amino-acid aminotransferase (ilvE) (Staphylococcus epidermidis (strain ATCC 35984 / DSM 28319 / BCRC 17069 / CCUG 31568 / BM 3577 / RP62A)).